The chain runs to 905 residues: Transcription termination factor 1 (905 aa).

2 stretches are compositionally biased toward basic and acidic residues: residues 1 to 16 and 24 to 33; these read MEGE…PVSD and IHKERPQKHS. The disordered stretch occupies residues 1-33; the sequence is MEGESSRFEIHTPVSDKKKKKCSIHKERPQKHS. The segment at 1-223 is N-terminal region (NRD); that stretch reads MEGESSRFEI…AHKNKSKKKK (223 aa). At Ser65 the chain carries Phosphoserine. Residues 151–443 form a disordered region; that stretch reads SHAHKSEALH…KSRPRQKKTQ (293 aa). 2 stretches are compositionally biased toward basic residues: residues 163-174 and 215-226; these read VREKKNKKHQRK and HKNKSKKKKKKS. Ser240 is subject to Phosphoserine. Position 248 is a phosphothreonine (Thr248). Basic residues-rich tracts occupy residues 270 to 283, 330 to 339, and 385 to 401; these read THKK…KKKS, NKSKKKKKKS, and TKKK…KRAR. Ser403 carries the post-translational modification Phosphoserine. A compositionally biased stretch (polar residues) spans 410 to 419; it reads PSKNSESTLF. At Tyr476 the chain carries Phosphotyrosine. Ser478, Ser481, and Ser487 each carry phosphoserine. Positions 498 to 886 are may be involved in interaction with ARF; sequence LQEFIPNIKD…IEKESEGQAP (389 aa). 2 consecutive Myb-like domains span residues 612–661 and 661–745; these read DVNN…SQIS and SSQR…TEIL. Lys700 is covalently cross-linked (Glycyl lysine isopeptide (Lys-Gly) (interchain with G-Cter in SUMO2)). Position 872 is a phosphoserine (Ser872).

Oligomer. The oligomeric structure enables to interact simultaneously with two separate DNA fragments. Interacts with BAZ2A/TIP5. Interacts with CAVIN1. Interacts (via the N-terminal region (NRD) and a C-terminal region) with CDKN2A/ARF; the interaction is direct. Interacts (via C-terminal region) with NPM1/B23.

It is found in the nucleus. The protein localises to the nucleolus. The protein resides in the nucleoplasm. Functionally, multifunctional nucleolar protein that terminates ribosomal gene transcription, mediates replication fork arrest and regulates RNA polymerase I transcription on chromatin. Plays a dual role in rDNA regulation, being involved in both activation and silencing of rDNA transcription. Interaction with BAZ2A/TIP5 recovers DNA-binding activity. This is Transcription termination factor 1 (TTF1) from Homo sapiens (Human).